Here is a 1167-residue protein sequence, read N- to C-terminus: Tight junction protein 2 (1167 aa).

Residues 10–97 form the PDZ 1 domain; sequence TVTLQKDSKR…IAAIVVKRPR (88 aa). 10 positions are modified to phosphoserine: S107, S127, S130, S140, S145, S147, S173, S194, S205, and S239. The interval 129-195 is disordered; sequence RSGYSERSRH…SRERSRGRSL (67 aa). The tract at residues 225–286 is disordered; it reads SYHEAYEPDY…KGQHDPDRPI (62 aa). Positions 242-262 are enriched in basic and acidic residues; that stretch reads YDRRAHPETRYERSRSREHLR. In terms of domain architecture, PDZ 2 spans 287–365; that stretch reads GVLLTKSKAN…KLQLVVLRDS (79 aa). Residues S305, S378, S380, S386, S395, S404, S410, and S411 each carry the phosphoserine modification. The disordered stretch occupies residues 381-485; that stretch reads EVEDISEIES…LRPSPEDEAI (105 aa). Over residues 395–426 the composition is skewed to basic and acidic residues; that stretch reads SPEERRQQYSDQDYHSSTEKLKERPSSREETS. T435 is subject to Phosphothreonine. At S479 the chain carries Phosphoserine. Positions 489 to 570 constitute a PDZ 3 domain; that stretch reads NTKMVRFKKG…GETVTILAQS (82 aa). At Y554 the chain carries Phosphotyrosine. Positions 584–649 constitute an SH3 domain; the sequence is GDSFFIRSHF…PNKSRAEQMA (66 aa). Positions 660-858 constitute a Guanylate kinase-like domain; sequence GDRADFWRMR…WFGSLKDSIQ (199 aa). Residues S684 and S884 each carry the phosphoserine modification. At T887 the chain carries Phosphothreonine. 2 positions are modified to phosphoserine: S895 and S902. Disordered regions lie at residues 904–1055 and 1095–1167; these read FEDT…PRSV and YAVP…DTEL. Phosphothreonine is present on residues T907 and T915. The segment covering 938–949 has biased composition (basic and acidic residues); that stretch reads VQHEENIRKSSP. S948, S960, S968, S988, and S1044 each carry phosphoserine. The span at 976–990 shows a compositional bias: basic and acidic residues; it reads EPPKARSQNREDSFD. Over residues 1037–1049 the composition is skewed to acidic residues; the sequence is ESEEVGESTEEQE. The residue at position 1095 (Y1095) is a Phosphotyrosine. A phosphoserine mark is found at S1124 and S1136. An interaction with SCRIB region spans residues 1165–1167; the sequence is TEL.

It belongs to the MAGUK family. In terms of assembly, homodimer. Interacts (via PDZ2 domain) with TJP1/ZO1 (via PDZ2 domain). Interacts with UBN1. Interacts with SCRIB. Interacts with OCLN. Interacts with SAFB in the nucleus. Interacts with USP53 (via the C-terminal region). Interacts with claudins, including CLDN1, CLDN2, CLDN3, CLDN5 and CLDN7. Interacts with CLDN18. Interacts (via N-terminus) with CTNNA1.

It localises to the cell junction. Its subcellular location is the adherens junction. The protein localises to the cell membrane. It is found in the nucleus. The protein resides in the tight junction. In terms of biological role, plays a role in tight junctions and adherens junctions. Acts as a positive regulator of RANKL-induced osteoclast differentiation, potentially via mediating downstream transcriptional activity. In Mus musculus (Mouse), this protein is Tight junction protein 2.